The chain runs to 73 residues: Cell division protein ZapB (73 aa).

Residues 3–69 (LELLSKLETK…EKVTGLVGLL (67 aa)) adopt a coiled-coil conformation. The interval 30-50 (EKQKSSTLSEHNQQLNEQNQQ) is disordered. The span at 41-50 (NQQLNEQNQQ) shows a compositional bias: low complexity.

It belongs to the ZapB family. Homodimer. The ends of the coiled-coil dimer bind to each other, forming polymers. Interacts with FtsZ.

The protein localises to the cytoplasm. Its function is as follows. Non-essential, abundant cell division factor that is required for proper Z-ring formation. It is recruited early to the divisome by direct interaction with FtsZ, stimulating Z-ring assembly and thereby promoting cell division earlier in the cell cycle. Its recruitment to the Z-ring requires functional FtsA or ZipA. In Shewanella putrefaciens (strain CN-32 / ATCC BAA-453), this protein is Cell division protein ZapB.